The chain runs to 860 residues: MATLYPKPKRGQKIIFNEEGEGTIDTKPQGVMFDPGVPWYNIPLPELHEDKKFVNVDHVSELETRGLLLLKEDSERFSETLGHGTADKRMLQTLISSGTTSDRISALTLLVQESPIHAVKALETLLSICSKKSRNEATQAITTLKDLFIGGLLPDRKLKYMKQQSCLGSKNVTDKHLMVWAFESFLKSFYFKYIQIIEALSFDALLFVKSQMVSTIYDLLKAKPEQEQNLLKLLINKLGDKENKIASKASYSILQLEASHPAMKLVITKEIERFIFAPSTSRTSCYYTLITLNQTVLTHKQVDVANLLIEIYFVFFTKLLFALEKEEVADAPTLEKKSLQSDSKNKKSQKRKKDEDLRKEAEENVNSRVISAVLTGVNRAYPFAEVNSEKFDKHMNTLFAITHTASFNTSVQVLMLIFQASASRDFISDRYYKSLYESLLDPRLTTSSKQSLYLNLLYKSLIIDNNIPRVRAFIKRMVQVSAWQQPPLVTGLFHVMHQLVIATTALRSMFTNAEIHDFDGDEEEVFKDVEEDDVSEDQKVDSDKDGKLSDKQSHSAYVVGNVSVSTKKEHLSYDGRKRDPQYSNADGSCLWEIHPFLNHFHPTVSLLAKSLVYGEKILGKPNLSLHTLNHFLDKFAYRNPKKSAAARGHSIMQPLAGGLSKGYVPGSTYSGVPMNSEQFTSKKQEEIPVDELFFYRFFNDKYIKGKQARKTKVDRDEEGEIDEDEVWKALVDSKPQLEMDEEESDFDSEEMDKAMTDMGSDSEQSADENDNESMASEEKPMFSDEENLSEIAHSEDEFDDTVDFFEDENDLLPFNETDDEEEIQTVDHSETHSHKKKKRKAIKDLPVFADAESYAHLLEN.

2 stretches are compositionally biased toward basic and acidic residues: residues 334–345 and 536–551; these read LEKKSLQSDSKN and EDQK…LSDK. Disordered regions lie at residues 334–360, 530–551, 708–798, and 813–842; these read LEKK…LRKE, EEDD…LSDK, ARKT…EDEF, and PFNE…RKAI. 3 stretches are compositionally biased toward acidic residues: residues 716-725, 738-750, and 813-824; these read DEEGEIDEDE, EMDE…DSEE, and PFNETDDEEEIQ. A phosphoserine mark is found at S744 and S748.

It belongs to the CBF/MAK21 family.

This is an uncharacterized protein from Schizosaccharomyces pombe (strain 972 / ATCC 24843) (Fission yeast).